A 1368-amino-acid polypeptide reads, in one-letter code: DNA-directed RNA polymerase subunit beta (1368 aa).

This sequence belongs to the RNA polymerase beta chain family. In terms of assembly, the RNAP catalytic core consists of 2 alpha, 1 beta, 1 beta' and 1 omega subunit. When a sigma factor is associated with the core the holoenzyme is formed, which can initiate transcription.

It catalyses the reaction RNA(n) + a ribonucleoside 5'-triphosphate = RNA(n+1) + diphosphate. Functionally, DNA-dependent RNA polymerase catalyzes the transcription of DNA into RNA using the four ribonucleoside triphosphates as substrates. In Paraburkholderia phytofirmans (strain DSM 17436 / LMG 22146 / PsJN) (Burkholderia phytofirmans), this protein is DNA-directed RNA polymerase subunit beta.